Reading from the N-terminus, the 159-residue chain is Lipoprotein signal peptidase (159 aa).

3 helical membrane-spanning segments follow: residues 4–24 (PYFVSITLFITIAVLILDQVT), 64–84 (MSFFFIVTIVVLGLLVFFYIK), and 88–108 (GNFLMQVAISLLFAGALGNFI). Active-site residues include Asp-118 and Asp-136. The helical transmembrane segment at 131 to 151 (IFNGADSSLTIGVILVLIALL) threads the bilayer.

The protein belongs to the peptidase A8 family.

The protein resides in the cell membrane. The catalysed reaction is Release of signal peptides from bacterial membrane prolipoproteins. Hydrolyzes -Xaa-Yaa-Zaa-|-(S,diacylglyceryl)Cys-, in which Xaa is hydrophobic (preferably Leu), and Yaa (Ala or Ser) and Zaa (Gly or Ala) have small, neutral side chains.. It participates in protein modification; lipoprotein biosynthesis (signal peptide cleavage). Functionally, this protein specifically catalyzes the removal of signal peptides from prolipoproteins. The polypeptide is Lipoprotein signal peptidase (Staphylococcus carnosus (strain TM300)).